A 410-amino-acid polypeptide reads, in one-letter code: Phosphoglycerate kinase (410 aa).

Residues 19-21 (DLN), Arg34, 57-60 (HQGK), Arg114, and Arg154 contribute to the substrate site. ATP contacts are provided by residues Glu332 and 358 to 361 (GGHS).

The protein belongs to the phosphoglycerate kinase family. Homodimer.

It is found in the cytoplasm. It catalyses the reaction (2R)-3-phosphoglycerate + ATP = (2R)-3-phospho-glyceroyl phosphate + ADP. The protein operates within carbohydrate degradation; glycolysis; pyruvate from D-glyceraldehyde 3-phosphate: step 2/5. The polypeptide is Phosphoglycerate kinase (pgk) (Pyrococcus abyssi (strain GE5 / Orsay)).